Here is a 210-residue protein sequence, read N- to C-terminus: uncharacterized protein (210 aa).

4 helical membrane-spanning segments follow: residues 5 to 25, 50 to 70, 75 to 95, and 155 to 175; these read LAYI…TMLV, FWTV…VILF, YLGA…KSMF, and IILA…LVYI.

It belongs to the Rht family.

The protein resides in the cell membrane. This is an uncharacterized protein from Bacillus subtilis (strain 168).